A 139-amino-acid polypeptide reads, in one-letter code: Probable disulfide formation protein C 2 (139 aa).

A helical membrane pass occupies residues 6-25 (KYHIAIAWMIATSAMLISLF). Cysteines 35 and 38 form a disulfide. 2 helical membrane passes run 40 to 59 (YQRMAMYPLVLILGIGMYRK) and 66 to 83 (YAFPFTCIGLILSVYQIT). Cys-95 and Cys-101 are joined by a disulfide. A helical transmembrane segment spans residues 110 to 133 (GFISIPMLSFIGFLVIIILIYIES).

It belongs to the DsbB family. BdbC subfamily.

It localises to the cell membrane. Functionally, required for disulfide bond formation in some proteins. The chain is Probable disulfide formation protein C 2 (bdbC2) from Bacillus cereus (strain ATCC 10987 / NRS 248).